Consider the following 513-residue polypeptide: Activin receptor type-2A (513 aa).

Residues Met1–Gly19 form the signal peptide. The Extracellular segment spans residues Ala20–Thr139. Intrachain disulfides connect Cys30/Cys60, Cys50/Cys78, Cys85/Cys104, Cys91/Cys103, and Cys105/Cys110. Residues Asn43 and Asn66 are each glycosylated (N-linked (GlcNAc...) asparagine). A helical membrane pass occupies residues Leu140–Met160. Residues Tyr161–Leu513 are Cytoplasmic-facing. Positions Leu192–Leu485 constitute a Protein kinase domain. Residues Lys198–Val206 and Lys219 contribute to the ATP site. Asp322 functions as the Proton acceptor in the catalytic mechanism.

Belongs to the protein kinase superfamily. TKL Ser/Thr protein kinase family. TGFB receptor subfamily. Mg(2+) serves as cofactor. The cofactor is Mn(2+). Expressed in hen anterior pituitary during the ovulatory cycle and in the ovarian follicle.

It localises to the cell membrane. The catalysed reaction is L-threonyl-[receptor-protein] + ATP = O-phospho-L-threonyl-[receptor-protein] + ADP + H(+). It catalyses the reaction L-seryl-[receptor-protein] + ATP = O-phospho-L-seryl-[receptor-protein] + ADP + H(+). On ligand binding, forms a receptor complex consisting of two type II and two type I transmembrane serine/threonine kinases. Type II receptors phosphorylate and activate type I receptors which autophosphorylate, then bind and activate SMAD transcriptional regulators. Receptor for activin A, activin B and inhibin A. May modulate neuropeptide expression in dorsal root ganglia (DRG) neurons and ovarian follicle development. The protein is Activin receptor type-2A (ACVR2A) of Gallus gallus (Chicken).